The following is a 408-amino-acid chain: Serine/threonine transporter SstT (408 aa).

10 consecutive transmembrane segments (helical) span residues 15-35 (MGLIPQITIGIIAGVLLAVIW), 49-69 (FISALKAVAPILVFALVTAAI), 85-105 (LLYVIGTLVAAVVAVIASFVF), 142-162 (ALMEGNFIAILAWAVGLGLML), 192-212 (PLGIFGLVANTLADAGIGALL), 218-238 (LAVIVGCMLFVALVTNPLIVF), 246-268 (YPLVFACLRGSAITAFFTRSSAA), 289-309 (ISIPLGATINMAGAAITISVI), 317-337 (LGIPVDFPTALLLCVVSSIAA), and 362-382 (TEVAMQVVAIGFVISVVQDST).

Belongs to the dicarboxylate/amino acid:cation symporter (DAACS) (TC 2.A.23) family.

It localises to the cell inner membrane. It carries out the reaction L-serine(in) + Na(+)(in) = L-serine(out) + Na(+)(out). It catalyses the reaction L-threonine(in) + Na(+)(in) = L-threonine(out) + Na(+)(out). In terms of biological role, involved in the import of serine and threonine into the cell, with the concomitant import of sodium (symport system). The sequence is that of Serine/threonine transporter SstT from Marinobacter nauticus (strain ATCC 700491 / DSM 11845 / VT8) (Marinobacter aquaeolei).